The following is a 193-amino-acid chain: MRLTDIEIEQALDNGTIVIEPRPNNDAISGVSVDVRLGGQFRVFKDHTAPFIDLSGPSGEVQAALDRVMSEIIEIPDGEAFFLHPGELALAVTYESVTLPADIVGWLDGRSSLARLGLMVHVTAHRIDPGWQGKIVLEFYNSGKLPLALRPRMTIGALNFERLSGPVARPYNKRKNAKYKDQQDAVASRISQD.

DCTP contacts are provided by residues 110–115, Asp-128, 136–138, Tyr-171, Lys-178, and Gln-182; these read RSSLAR and VLE. Glu-138 acts as the Proton donor/acceptor in catalysis. Residues 171 to 193 are disordered; it reads YNKRKNAKYKDQQDAVASRISQD.

This sequence belongs to the dCTP deaminase family. As to quaternary structure, homotrimer.

The enzyme catalyses dCTP + H2O + H(+) = dUTP + NH4(+). The protein operates within pyrimidine metabolism; dUMP biosynthesis; dUMP from dCTP (dUTP route): step 1/2. Catalyzes the deamination of dCTP to dUTP. In Shewanella oneidensis (strain ATCC 700550 / JCM 31522 / CIP 106686 / LMG 19005 / NCIMB 14063 / MR-1), this protein is dCTP deaminase.